A 504-amino-acid chain; its full sequence is MPTVEELYRNYGILADATEQVGQHKDAYQVILDGVKGGTKEKRLAAQFIPKFFKHFPELADSAINAQLDLCEDEDVSIRRQAIKELPQFATGENLPRVADILTQLLQTDDSAEFNLVNNALLSIFKMDAKGTLGGLFSQILQGEDIVRERAIKFLSTKLKTLPDEVLTKEVEELILTESKKVLEDVTGEEFVLFMKILSGLKSLQTVSGRQQLVELVAEQADLEQAFSPSDPDCVDRLLQCTRQAVPLFSKNVHSTRFVTYFCEQVLPNLSTLTTPVEGLDIQLEVLKLLAEMSSFCGDMEKLETNLRKLFDKLLEYMPLPPEEAENGENAGNEEPKLQFSYVECLLYSFHQLGRKLPDFLTAKLNAEKLKDFKIRLQYFARGLQVYIRQLRLALQGKTGEALKTEENKIKVVALKITNNINVLIKDLFHIPPSYKSTVTLSWKPVQKVEIGQKRTSEDTSSGSPPKKSPGGPKRDARQIYNPPSGKYSSNLSNFNYERSLQGK.

Positions 1 to 360 (MPTVEELYRN…HQLGRKLPDF (360 aa)) are ARM-like and Heat-like helical repeats. K251 is subject to N6-acetyllysine. Positions 370–391 (LKDFKIRLQYFARGLQVYIRQL) are leucine-zipper. T399 is subject to Phosphothreonine. The segment at 452-504 (GQKRTSEDTSSGSPPKKSPGGPKRDARQIYNPPSGKYSSNLSNFNYERSLQGK) is disordered. A Nuclear localization signal motif is present at residues 454 to 475 (KRTSEDTSSGSPPKKSPGGPKR). The span at 461 to 472 (SSGSPPKKSPGG) shows a compositional bias: low complexity. 3 positions are modified to phosphoserine: S462, S464, and S469. The span at 487–504 (KYSSNLSNFNYERSLQGK) shows a compositional bias: polar residues.

This sequence belongs to the API5 family. In terms of assembly, monomer. Interacts with FGF2 and ACIN1. Acetylation at Lys-251 impairs antiapoptotic function.

It localises to the nucleus. The protein resides in the cytoplasm. Antiapoptotic factor that may have a role in protein assembly. Negatively regulates ACIN1. By binding to ACIN1, it suppresses ACIN1 cleavage from CASP3 and ACIN1-mediated DNA fragmentation. Also known to efficiently suppress E2F1-induced apoptosis. The protein is Apoptosis inhibitor 5 (Api5) of Mus musculus (Mouse).